A 330-amino-acid polypeptide reads, in one-letter code: MDPTTLVWGTESTTMNGNDQALPLLCGKETLILVVLILFIALVGLVGNAFVLWLLGFRMRRNAFSVYVLSLAGADFLFLCFPMINCLAYLINFFHSISINFPSFFTTVMTCAYLAGLSMLSAISTERCLSVLWPIWYRSRRPRHLSAVMCVLLWALSLLLSILEGKFCGFLFSDGDSGWCQTFDFITAAWLMFLFVVLCGSSLALLVRILCGSRGLPLTRLYLTILLTVLIFLLCGLPFGIQWFLILWIWKNSDVLFCHIHPVSVVLSSFNSSANPIIYFFVGSFRKQWRLRQPVLKLALQRALQDTAEVDHSEGCFSQGTLEMSGSSLV.

Residues 1 to 33 lie on the Extracellular side of the membrane; the sequence is MDPTTLVWGTESTTMNGNDQALPLLCGKETLIL. The chain crosses the membrane as a helical span at residues 34 to 54; it reads VVLILFIALVGLVGNAFVLWL. The Cytoplasmic segment spans residues 55–63; the sequence is LGFRMRRNA. The helical transmembrane segment at 64 to 84 threads the bilayer; it reads FSVYVLSLAGADFLFLCFPMI. The Extracellular segment spans residues 85–96; the sequence is NCLAYLINFFHS. Residues 97 to 117 traverse the membrane as a helical segment; the sequence is ISINFPSFFTTVMTCAYLAGL. The Cytoplasmic segment spans residues 118–144; it reads SMLSAISTERCLSVLWPIWYRSRRPRH. A helical membrane pass occupies residues 145–165; that stretch reads LSAVMCVLLWALSLLLSILEG. Residues 166 to 184 lie on the Extracellular side of the membrane; the sequence is KFCGFLFSDGDSGWCQTFD. Residues 185 to 205 form a helical membrane-spanning segment; it reads FITAAWLMFLFVVLCGSSLAL. The Cytoplasmic segment spans residues 206 to 228; the sequence is LVRILCGSRGLPLTRLYLTILLT. The chain crosses the membrane as a helical span at residues 229–249; the sequence is VLIFLLCGLPFGIQWFLILWI. The Extracellular segment spans residues 250-264; that stretch reads WKNSDVLFCHIHPVS. A helical membrane pass occupies residues 265–285; that stretch reads VVLSSFNSSANPIIYFFVGSF. Residues 286–330 lie on the Cytoplasmic side of the membrane; sequence RKQWRLRQPVLKLALQRALQDTAEVDHSEGCFSQGTLEMSGSSLV.

Belongs to the G-protein coupled receptor 1 family. Mas subfamily.

The protein localises to the cell membrane. Mast cell-specific receptor for basic secretagogues, i.e. cationic amphiphilic drugs, as well as endo- or exogenous peptides, consisting of a basic head group and a hydrophobic core. Recognizes and binds small molecules containing a cyclized tetrahydroisoquinoline (THIQ), such as non-steroidal neuromuscular blocking drugs (NMBDs), including tubocurarine and atracurium. In response to these compounds, mediates pseudo-allergic reactions characterized by histamine release, inflammation and airway contraction. The chain is Mas-related G-protein coupled receptor member X2 (MRGPRX2) from Trachypithecus francoisi (Francois' leaf monkey).